A 433-amino-acid polypeptide reads, in one-letter code: Glutamyl-tRNA reductase (433 aa).

Substrate contacts are provided by residues 49–52 (TCNR), Ser109, 114–116 (EGQ), and Gln120. The active-site Nucleophile is the Cys50. 189–194 (GAGKMS) serves as a coordination point for NADP(+).

The protein belongs to the glutamyl-tRNA reductase family. In terms of assembly, homodimer.

It carries out the reaction (S)-4-amino-5-oxopentanoate + tRNA(Glu) + NADP(+) = L-glutamyl-tRNA(Glu) + NADPH + H(+). The protein operates within porphyrin-containing compound metabolism; protoporphyrin-IX biosynthesis; 5-aminolevulinate from L-glutamyl-tRNA(Glu): step 1/2. It participates in porphyrin-containing compound metabolism; chlorophyll biosynthesis. Catalyzes the NADPH-dependent reduction of glutamyl-tRNA(Glu) to glutamate 1-semialdehyde (GSA). The polypeptide is Glutamyl-tRNA reductase (Acaryochloris marina (strain MBIC 11017)).